A 526-amino-acid polypeptide reads, in one-letter code: Maturase K (526 aa).

Belongs to the intron maturase 2 family. MatK subfamily.

The protein resides in the plastid. Its subcellular location is the chloroplast. Its function is as follows. Usually encoded in the trnK tRNA gene intron. Probably assists in splicing its own and other chloroplast group II introns. This is Maturase K from Iris pseudacorus (Yellow flag).